A 757-amino-acid polypeptide reads, in one-letter code: Polyribonucleotide nucleotidyltransferase (757 aa).

Mg(2+) is bound by residues Asp-487 and Asp-493. A KH domain is found at 554–613; sequence PRITTVRVKPDQIRLIIGPGGKTIKGIVDQTGVAIDVEDDGTVNVASADSDAVKRALDII. In terms of domain architecture, S1 motif spans 623 to 691; the sequence is GATYKGTVKR…REGKIRLSRR (69 aa). Residues 697 to 757 form a disordered region; sequence PEGEEGDRAR…PPRERRERRS (61 aa). 2 stretches are compositionally biased toward basic and acidic residues: residues 702-711 and 719-757; these read GDRARERMAQ and PRRD…ERRS.

This sequence belongs to the polyribonucleotide nucleotidyltransferase family. It depends on Mg(2+) as a cofactor.

The protein localises to the cytoplasm. It carries out the reaction RNA(n+1) + phosphate = RNA(n) + a ribonucleoside 5'-diphosphate. Functionally, involved in mRNA degradation. Catalyzes the phosphorolysis of single-stranded polyribonucleotides processively in the 3'- to 5'-direction. The sequence is that of Polyribonucleotide nucleotidyltransferase from Sorangium cellulosum (strain So ce56) (Polyangium cellulosum (strain So ce56)).